A 271-amino-acid chain; its full sequence is Glutamate racemase (271 aa).

Substrate-binding positions include 12–13 (DS) and 44–45 (YG). The active-site Proton donor/acceptor is the C75. A substrate-binding site is contributed by 76-77 (NT). Catalysis depends on C185, which acts as the Proton donor/acceptor. 186 to 187 (TH) lines the substrate pocket.

The protein belongs to the aspartate/glutamate racemases family.

The enzyme catalyses L-glutamate = D-glutamate. It functions in the pathway cell wall biogenesis; peptidoglycan biosynthesis. Functionally, provides the (R)-glutamate required for cell wall biosynthesis. The chain is Glutamate racemase from Mycobacterium marinum (strain ATCC BAA-535 / M).